A 549-amino-acid chain; its full sequence is Glucose-6-phosphate isomerase (549 aa).

The active-site Proton donor is the E355. Active-site residues include H386 and K514.

It belongs to the GPI family.

The protein localises to the cytoplasm. The catalysed reaction is alpha-D-glucose 6-phosphate = beta-D-fructose 6-phosphate. It participates in carbohydrate biosynthesis; gluconeogenesis. Its pathway is carbohydrate degradation; glycolysis; D-glyceraldehyde 3-phosphate and glycerone phosphate from D-glucose: step 2/4. Catalyzes the reversible isomerization of glucose-6-phosphate to fructose-6-phosphate. The polypeptide is Glucose-6-phosphate isomerase (Salmonella schwarzengrund (strain CVM19633)).